The primary structure comprises 414 residues: Serine hydroxymethyltransferase (414 aa).

(6S)-5,6,7,8-tetrahydrofolate-binding positions include L117 and 121-123 (GHL). K226 bears the N6-(pyridoxal phosphate)lysine mark. A (6S)-5,6,7,8-tetrahydrofolate-binding site is contributed by 349-351 (SPF).

Belongs to the SHMT family. As to quaternary structure, homodimer. Pyridoxal 5'-phosphate serves as cofactor.

Its subcellular location is the cytoplasm. It carries out the reaction (6R)-5,10-methylene-5,6,7,8-tetrahydrofolate + glycine + H2O = (6S)-5,6,7,8-tetrahydrofolate + L-serine. The protein operates within one-carbon metabolism; tetrahydrofolate interconversion. It participates in amino-acid biosynthesis; glycine biosynthesis; glycine from L-serine: step 1/1. Functionally, catalyzes the reversible interconversion of serine and glycine with tetrahydrofolate (THF) serving as the one-carbon carrier. This reaction serves as the major source of one-carbon groups required for the biosynthesis of purines, thymidylate, methionine, and other important biomolecules. Also exhibits THF-independent aldolase activity toward beta-hydroxyamino acids, producing glycine and aldehydes, via a retro-aldol mechanism. The chain is Serine hydroxymethyltransferase from Desulfovibrio desulfuricans (strain ATCC 27774 / DSM 6949 / MB).